A 439-amino-acid polypeptide reads, in one-letter code: UDP-N-acetylglucosamine--peptide N-acetylglucosaminyltransferase stabilizing protein GtfB (439 aa).

This sequence belongs to the GtfB family. In terms of assembly, interacts with glycosyltransferase GtfA (Gtf2); probably forms a heterotetramer with 2 subunits each of GtfA and GtfB. Part of the accessory SecA2/SecY2 protein translocation apparatus.

The protein resides in the cell membrane. It participates in protein modification; protein glycosylation. In terms of biological role, required for the polymorphic O-glycosylation of the serine-rich repeat protein Fap1. A stabilizing protein that is part of the accessory SecA2/SecY2 system specifically required to export Fap1, a serine-rich fimbrial adhesin encoded upstream in the same operon. The GtfA-GtfB (Gtf1-Gtf2 in this bacteria) complex adds GlcNAc from UDP-GlcNAc to Fap1, attaching the first sugar residue. Cannot use not UDP-Glc as substrate. Stabilizes the glycosylation activity of GtfA, causing it to partially localize to the cellular membrane where it is more protease resistant. This chain is UDP-N-acetylglucosamine--peptide N-acetylglucosaminyltransferase stabilizing protein GtfB, found in Streptococcus parasanguinis.